The primary structure comprises 116 residues: uncharacterized protein (116 aa).

Topologically, residues 1 to 46 are extracellular; sequence MGDNTTVAPGTNQTLVEEDLGAQITHTLMVQIMSKLNEMLTEYQPQ. N-linked (GlcNAc...) asparagine; by host glycosylation is found at Asn-4 and Asn-12. The chain crosses the membrane as a helical span at residues 47–67; the sequence is IIGIGATVLAIFVIMFISLLI. Residues 68–116 are Cytoplasmic-facing; the sequence is ILGCNCIRPYNFKNLKRYITGKASKSVEYQPLKMSAVNMGMDEDDEFLA.

The protein localises to the host membrane. This is an uncharacterized protein from Magallana gigas (Pacific oyster).